The chain runs to 466 residues: Soluble pyridine nucleotide transhydrogenase (466 aa).

FAD is bound at residue 36–45; the sequence is ERYHNIGGGC.

This sequence belongs to the class-I pyridine nucleotide-disulfide oxidoreductase family. FAD is required as a cofactor.

It is found in the cytoplasm. The catalysed reaction is NAD(+) + NADPH = NADH + NADP(+). Functionally, conversion of NADPH, generated by peripheral catabolic pathways, to NADH, which can enter the respiratory chain for energy generation. The protein is Soluble pyridine nucleotide transhydrogenase of Erwinia tasmaniensis (strain DSM 17950 / CFBP 7177 / CIP 109463 / NCPPB 4357 / Et1/99).